A 205-amino-acid polypeptide reads, in one-letter code: Methylamine utilization protein MauD (205 aa).

A helical transmembrane segment spans residues 5 to 25 (IMIASNVLLWGAFLALAALML). One can recognise a Thioredoxin domain in the interval 50–184 (PDIGERSPVF…VESLFETTRV (135 aa)).

It is found in the membrane. The protein operates within one-carbon metabolism; methylamine degradation. May be specifically involved in the processing, transport, and/or maturation of the MADH beta-subunit. The polypeptide is Methylamine utilization protein MauD (mauD) (Methylobacillus flagellatus (strain ATCC 51484 / DSM 6875 / VKM B-1610 / KT)).